Reading from the N-terminus, the 379-residue chain is Quinolinate synthase (379 aa).

Positions 60 and 81 each coordinate iminosuccinate. Cys-126 provides a ligand contact to [4Fe-4S] cluster. Residues 152–154 (YAN) and Ser-169 contribute to the iminosuccinate site. Cys-213 is a binding site for [4Fe-4S] cluster. Residues 239 to 241 (HPE) and Thr-256 each bind iminosuccinate. Cys-310 is a binding site for [4Fe-4S] cluster.

The protein belongs to the quinolinate synthase family. Type 1 subfamily. [4Fe-4S] cluster is required as a cofactor.

It localises to the cytoplasm. The catalysed reaction is iminosuccinate + dihydroxyacetone phosphate = quinolinate + phosphate + 2 H2O + H(+). Its pathway is cofactor biosynthesis; NAD(+) biosynthesis; quinolinate from iminoaspartate: step 1/1. In terms of biological role, catalyzes the condensation of iminoaspartate with dihydroxyacetone phosphate to form quinolinate. The polypeptide is Quinolinate synthase (Herminiimonas arsenicoxydans).